The primary structure comprises 291 residues: tRNA pseudouridine synthase B (291 aa).

Catalysis depends on Asp-41, which acts as the Nucleophile.

This sequence belongs to the pseudouridine synthase TruB family. Type 1 subfamily.

It catalyses the reaction uridine(55) in tRNA = pseudouridine(55) in tRNA. Its function is as follows. Responsible for synthesis of pseudouridine from uracil-55 in the psi GC loop of transfer RNAs. The polypeptide is tRNA pseudouridine synthase B (Parasynechococcus marenigrum (strain WH8102)).